Here is a 151-residue protein sequence, read N- to C-terminus: Large ribosomal subunit protein uL15 (151 aa).

This sequence belongs to the universal ribosomal protein uL15 family. Part of the 50S ribosomal subunit.

In terms of biological role, binds to the 23S rRNA. This chain is Large ribosomal subunit protein uL15, found in Hyperthermus butylicus (strain DSM 5456 / JCM 9403 / PLM1-5).